The sequence spans 667 residues: Flavin-dependent halogenase malA (667 aa).

Positions 48, 70, 79, and 82 each coordinate FAD. Lysine 108 is a catalytic residue. Residues arginine 144, valine 168, aspartate 399, and isoleucine 412 each contribute to the FAD site. Glutamate 494 contributes to the substrate binding site. Residues cysteine 597, cysteine 600, cysteine 613, and cysteine 616 each contribute to the Zn(2+) site. The tract at residues 621–646 (TEPQTAVTFDPPLTAEEEALLYAAWN) is flexible region.

This sequence belongs to the flavin-dependent halogenase family. The cofactor is Zn(2+).

It catalyses the reaction (+)-premalbrancheamide + 2 FAD + 2 chloride + 4 H(+) = (+)-malbrancheamide + 2 FADH2. The catalysed reaction is (+)-premalbrancheamide + FAD + chloride + 2 H(+) = (+)-malbrancheamide B + FADH2. The enzyme catalyses (+)-premalbrancheamide + FAD + chloride + 2 H(+) = (+)-isomalbrancheamide B + FADH2. It carries out the reaction (+)-malbrancheamide B + FAD + chloride + 2 H(+) = (+)-malbrancheamide + FADH2. It catalyses the reaction (+)-isomalbrancheamide B + FAD + chloride + 2 H(+) = (+)-malbrancheamide + FADH2. The catalysed reaction is (+)-premalbrancheamide + bromide + FAD + 2 H(+) = (+)-malbrancheamide C + FADH2. The enzyme catalyses (+)-premalbrancheamide + bromide + FAD + 2 H(+) = (+)-isomalbrancheamide C + FADH2. It carries out the reaction (+)-malbrancheamide B + bromide + FAD + 2 H(+) = (+)-malbrancheamide D + FADH2. It catalyses the reaction (+)-isomalbrancheamide B + bromide + FAD + 2 H(+) = (+)-isomalbrancheamide D + FADH2. The protein operates within alkaloid biosynthesis. Its function is as follows. Flavin-dependent halogenase; part of the gene cluster that mediates the biosynthesis of malbrancheamide, a dichlorinated fungal indole alkaloid that belongs to a family of natural products containing a characteristic bicyclo[2.2.2]diazaoctane core. The first step of malbrancheamide biosynthesis involves coupling of L-proline and L-tryptophan by malG, a bimodular NRPS, to produce L-Pro-L-Trp aldehyde through reductive offloading. This compound undergoes spontaneous cyclization and dehydration to give a dienamine which is reverse prenylated at C-2 by malE. The other prenyltransferase present in the cluster, malB, displays modest activity, suggesting that may be a redundant gene in the pathway. Subsequently, a [4+2] Diels-Alder cyclo-addition catalyzed by the bifunctional enzyme malC forms the characteristic bicyclo[2.2.2]diazaoctane ring of premalbrancheamid. Finally, the flavin-dependent halogenase malA catalyzes the iterative dichlorination of the indole ring of premalbrancheamide to yield C-9 monochlorinated malbrancheamide B, C-8 monochlorinated isomalbrancheamide B, and dichlorinated malbrancheamide. MalA is also able to brominate premalbrancheamide at C-9 to yield malbrancheamide C, and, to a lesser extend, at C-8 to yield isomalbrancheamide C. Finally, malA can brominate C-9 monochlorinated malbrancheamide B at C-8 to yield malbrancheamide D, or C-8 monochlorinated isomalbrancheamide B at C-9 to produce isomalbrancheamide D. The sequence is that of Flavin-dependent halogenase malA from Malbranchea aurantiaca.